The primary structure comprises 205 residues: Proteasome subunit beta type-3 (205 aa).

Residue Ser-2 is modified to N-acetylserine. Lys-77 is modified (N6-acetyllysine).

This sequence belongs to the peptidase T1B family. The 26S proteasome consists of a 20S proteasome core and two 19S regulatory subunits. The 20S proteasome core is a barrel-shaped complex made of 28 subunits that are arranged in four stacked rings. The two outer rings are each formed by seven alpha subunits, and the two inner rings are formed by seven beta subunits. The proteolytic activity is exerted by three beta-subunits PSMB5, PSMB6 and PSMB7. As to quaternary structure, (Microbial infection) Interacts with HIV-1 TAT protein.

It is found in the cytoplasm. The protein localises to the nucleus. Functionally, non-catalytic component of the 20S core proteasome complex involved in the proteolytic degradation of most intracellular proteins. This complex plays numerous essential roles within the cell by associating with different regulatory particles. Associated with two 19S regulatory particles, forms the 26S proteasome and thus participates in the ATP-dependent degradation of ubiquitinated proteins. The 26S proteasome plays a key role in the maintenance of protein homeostasis by removing misfolded or damaged proteins that could impair cellular functions, and by removing proteins whose functions are no longer required. Associated with the PA200 or PA28, the 20S proteasome mediates ubiquitin-independent protein degradation. This type of proteolysis is required in several pathways including spermatogenesis (20S-PA200 complex) or generation of a subset of MHC class I-presented antigenic peptides (20S-PA28 complex). In Homo sapiens (Human), this protein is Proteasome subunit beta type-3.